The sequence spans 462 residues: DIMBOA UDP-glucosyltransferase BX9 (462 aa).

His24 (proton acceptor) is an active-site residue. Position 24 (His24) interacts with an anthocyanidin. Residue Asp115 is the Charge relay of the active site. UDP-alpha-D-glucose-binding residues include Thr137, Ala336, Gln338, His353, Trp356, Asn357, Ser358, and Glu361. Gly376 contacts an anthocyanidin. Positions 377 and 378 each coordinate UDP-alpha-D-glucose.

Belongs to the UDP-glycosyltransferase family. It depends on Mg(2+) as a cofactor. The cofactor is Ca(2+). Expressed at the same levels in roots and shoots.

The enzyme catalyses DIMBOA + UDP-alpha-D-glucose = DIMBOA beta-D-glucoside + UDP + H(+). The catalysed reaction is DIBOA + UDP-alpha-D-glucose = DIBOA beta-D-glucoside + UDP + H(+). Functionally, glucosyltransferase involved in the last step of benzoxazinoid glucoside biosynthesis. Catalyzes the glucosylation of hydroxamic acids utilizing UDP-glucose as glucose doner, reducing the toxicity of these natural insecticides for storage. Can use DIMBOA and DIBOA as substrates, HMBOA (2-hydroxy-7-methoxy-2H-1,4-benzoxazin-3(4H)-one) and HBOA (2-hydroxy-2H-1,4-benzoxazin-3(4H)-one) with a lower efficiency, but not indole acetic acid or quercitin. The sequence is that of DIMBOA UDP-glucosyltransferase BX9 (BX9) from Zea mays (Maize).